A 330-amino-acid chain; its full sequence is Beta-ketoacyl-[acyl-carrier-protein] synthase III (330 aa).

Residues cysteine 114 and histidine 255 contribute to the active site. Residues glutamine 256–arginine 260 form an ACP-binding region. Asparagine 285 is an active-site residue.

It belongs to the thiolase-like superfamily. FabH family. Homodimer.

It is found in the cytoplasm. It carries out the reaction malonyl-[ACP] + acetyl-CoA + H(+) = 3-oxobutanoyl-[ACP] + CO2 + CoA. Its pathway is lipid metabolism; fatty acid biosynthesis. Catalyzes the condensation reaction of fatty acid synthesis by the addition to an acyl acceptor of two carbons from malonyl-ACP. Catalyzes the first condensation reaction which initiates fatty acid synthesis and may therefore play a role in governing the total rate of fatty acid production. Possesses both acetoacetyl-ACP synthase and acetyl transacylase activities. Its substrate specificity determines the biosynthesis of branched-chain and/or straight-chain of fatty acids. This chain is Beta-ketoacyl-[acyl-carrier-protein] synthase III, found in Nostoc sp. (strain PCC 7120 / SAG 25.82 / UTEX 2576).